A 432-amino-acid chain; its full sequence is Tol-Pal system protein TolB (432 aa).

The N-terminal stretch at methionine 1–alanine 29 is a signal peptide.

The protein belongs to the TolB family. In terms of assembly, the Tol-Pal system is composed of five core proteins: the inner membrane proteins TolA, TolQ and TolR, the periplasmic protein TolB and the outer membrane protein Pal. They form a network linking the inner and outer membranes and the peptidoglycan layer.

The protein localises to the periplasm. Its function is as follows. Part of the Tol-Pal system, which plays a role in outer membrane invagination during cell division and is important for maintaining outer membrane integrity. This chain is Tol-Pal system protein TolB, found in Ralstonia nicotianae (strain ATCC BAA-1114 / GMI1000) (Ralstonia solanacearum).